Here is a 536-residue protein sequence, read N- to C-terminus: MKSVILLSLAACAVAAPTAGVETIHDGAAPILSSSNAEAIPNAYIIKFKKHVDHKSAADHQMWIQKVHGEREDERLELRKRGLFDSVNDAFTGLKHTYNVGSGFLGYAGHFDEETIEKVRRHPDVEAIERDTIVHTMRYEEVKKDECNPDLEKGAPWGLSRVSHRESLSFSTYNKYLYSAEGGEGVDAYVIDTGTNIDHVDFEGRAHWGKTIPANDQDIDGNGHGTHCSGTVAGKKYGVAKKAQVYAVKVLKSNGSGTMSDVIAGVDFAAKSHKAQVSAAKDGKRKGFKGSVANMSLGGGKTTLLDAAVNAAVDAGIHFAVAAGNDNADACNYSPAAAAKAVTVGASALDDSRAYFSNWGKCTDIFAPGLNIQSTWIGSKTAINTISGTSMASPHIAGLLAYYLSLQPASDSEYSLATITPEKLKADLIKVGTVGILTDIPKDTPNVLAWNGGGCSNYFEIVSKGGYKAKAQADKSSSLLDSVTELEKAIEHDFRVISGKVVKEASSMTGQAEKLSEKIHQAVDEELKHFFGEARV.

The signal sequence occupies residues 1-15; it reads MKSVILLSLAACAVA. The propeptide occupies 16–147; that stretch reads APTAGVETIH…RYEEVKKDEC (132 aa). Positions 44–137 constitute an Inhibitor I9 domain; it reads YIIKFKKHVD…IERDTIVHTM (94 aa). Positions 156-462 constitute a Peptidase S8 domain; it reads PWGLSRVSHR…GGCSNYFEIV (307 aa). Residues Asp-192 and His-224 each act as charge relay system in the active site. Residues Asn-254 and Asn-294 are each glycosylated (N-linked (GlcNAc...) asparagine). The Charge relay system role is filled by Ser-390.

This sequence belongs to the peptidase S8 family.

It is found in the vacuole. The protein is Subtilisin-like proteinase Spm1 (SPM1) of Pyricularia oryzae (strain 70-15 / ATCC MYA-4617 / FGSC 8958) (Rice blast fungus).